The sequence spans 377 residues: S-adenosylmethionine decarboxylase proenzyme 2 (377 aa).

Active-site residues include Glu-24 and Glu-27. Ser-84 functions as the Schiff-base intermediate with substrate; via pyruvic acid in the catalytic mechanism. Pyruvic acid (Ser); by autocatalysis is present on Ser-84. Cys-98 acts as the Proton donor; for catalytic activity in catalysis. Residues Ser-246 and His-259 each act as proton acceptor; for processing activity in the active site.

The protein belongs to the eukaryotic AdoMetDC family. Requires pyruvate as cofactor. Post-translationally, is synthesized initially as an inactive proenzyme. Formation of the active enzyme involves a self-maturation process in which the active site pyruvoyl group is generated from an internal serine residue via an autocatalytic post-translational modification. Two non-identical subunits are generated from the proenzyme in this reaction, and the pyruvate is formed at the N-terminus of the alpha chain, which is derived from the carboxyl end of the proenzyme. The post-translation cleavage follows an unusual pathway, termed non-hydrolytic serinolysis, in which the side chain hydroxyl group of the serine supplies its oxygen atom to form the C-terminus of the beta chain, while the remainder of the serine residue undergoes an oxidative deamination to produce ammonia and the pyruvoyl group blocking the N-terminus of the alpha chain.

The enzyme catalyses S-adenosyl-L-methionine + H(+) = S-adenosyl 3-(methylsulfanyl)propylamine + CO2. Its pathway is amine and polyamine biosynthesis; S-adenosylmethioninamine biosynthesis; S-adenosylmethioninamine from S-adenosyl-L-methionine: step 1/1. This Dianthus caryophyllus (Carnation) protein is S-adenosylmethionine decarboxylase proenzyme 2 (SAMDC2).